We begin with the raw amino-acid sequence, 430 residues long: Histidine--tRNA ligase (430 aa).

Belongs to the class-II aminoacyl-tRNA synthetase family. As to quaternary structure, homodimer.

Its subcellular location is the cytoplasm. The catalysed reaction is tRNA(His) + L-histidine + ATP = L-histidyl-tRNA(His) + AMP + diphosphate + H(+). The polypeptide is Histidine--tRNA ligase (Anaplasma marginale (strain Florida)).